Consider the following 195-residue polypeptide: Cyclin-dependent kinase inhibitor 7 (195 aa).

Positions 1–11 are enriched in basic and acidic residues; sequence MSETKPKRDSE. Disordered stretches follow at residues 1-50, 61-80, and 117-154; these read MSET…SVSD, EEEDDHLSSSISSGCSSSET, and SSENLGETAEMDSATTEMRDQRKTEKKKKMEKSPTQAE. 2 stretches are compositionally biased toward low complexity: residues 37–50 and 68–80; these read SSSSSSSLAYSVSD and SSSISSGCSSSET. T151 carries the phosphothreonine; by KIN10 modification.

This sequence belongs to the CDI family. ICK/KRP subfamily. Specifically interacts with CDKA-1, but not with CDKB1-1. Interacts with CYCD4-1. Binds to FBL17. Ubiquitinated by SCF(FBL17). Ubiquitination leads to its subsequent degradation, thus controlling cell cycle progression. In terms of tissue distribution, expressed in flowers, in developing pollen, and at lower levels in roots and leaves.

It localises to the nucleus. It is found in the nucleoplasm. Functionally, binds and inhibits CYCD2-1/CDKA-1 complex kinase activity. May target specifically CDKA-1. In Arabidopsis thaliana (Mouse-ear cress), this protein is Cyclin-dependent kinase inhibitor 7 (KRP7).